We begin with the raw amino-acid sequence, 288 residues long: Pyridoxal kinase PdxY (288 aa).

Substrate is bound by residues serine 9 and 44–45 (TQ). ATP is bound by residues aspartate 111, glutamate 148, and lysine 181. Aspartate 224 is a substrate binding site.

Belongs to the pyridoxine kinase family. PdxY subfamily. As to quaternary structure, homodimer. Mg(2+) is required as a cofactor.

It catalyses the reaction pyridoxal + ATP = pyridoxal 5'-phosphate + ADP + H(+). It functions in the pathway cofactor metabolism; pyridoxal 5'-phosphate salvage; pyridoxal 5'-phosphate from pyridoxal: step 1/1. Its function is as follows. Pyridoxal kinase involved in the salvage pathway of pyridoxal 5'-phosphate (PLP). Catalyzes the phosphorylation of pyridoxal to PLP. In Haemophilus influenzae (strain ATCC 51907 / DSM 11121 / KW20 / Rd), this protein is Pyridoxal kinase PdxY.